Consider the following 143-residue polypeptide: MKFFRGMIGFCIAGMIVMSVWTPLAENYGIFGGYLAAFIIIGPMWFMNHHVGLIENDEDAAFVDMAVGIGICGIMRDVFMRGGGELVSSLPTIGLVAIGAVLAGIVAAAIEKDMARKHEAKQEKTEPGMNIKEEERLNENQLV.

4 helical membrane passes run 6-26 (GMIG…PLAE), 27-47 (NYGI…MWFM), 60-80 (AAFV…DVFM), and 90-110 (LPTI…AAAI). Residues 118 to 143 (HEAKQEKTEPGMNIKEEERLNENQLV) form a disordered region.

The protein localises to the membrane. Functionally, could be involved in the glycerol uptake either via facilitated diffusion or active transport. This chain is Putative glycerol transporter Lin0368, found in Listeria innocua serovar 6a (strain ATCC BAA-680 / CLIP 11262).